Reading from the N-terminus, the 154-residue chain is Small ribosomal subunit protein uS9 (154 aa).

Disordered regions lie at residues 1–33 (MVPP…SGLG) and 115–154 (PENN…YSKR). The segment covering 135–154 (KERKKAGLKKARKAPQYSKR) has biased composition (basic residues).

It belongs to the universal ribosomal protein uS9 family.

The sequence is that of Small ribosomal subunit protein uS9 from Tropheryma whipplei (strain TW08/27) (Whipple's bacillus).